The chain runs to 108 residues: Thiosulfate sulfurtransferase GlpE (108 aa).

Positions 17–105 (RQGAAVLVDI…WHRRFPANVA (89 aa)) constitute a Rhodanese domain. Residue cysteine 65 is the Cysteine persulfide intermediate of the active site.

The protein belongs to the GlpE family.

The protein resides in the cytoplasm. The catalysed reaction is thiosulfate + hydrogen cyanide = thiocyanate + sulfite + 2 H(+). It carries out the reaction thiosulfate + [thioredoxin]-dithiol = [thioredoxin]-disulfide + hydrogen sulfide + sulfite + 2 H(+). In terms of biological role, transferase that catalyzes the transfer of sulfur from thiosulfate to thiophilic acceptors such as cyanide or dithiols. May function in a CysM-independent thiosulfate assimilation pathway by catalyzing the conversion of thiosulfate to sulfite, which can then be used for L-cysteine biosynthesis. This chain is Thiosulfate sulfurtransferase GlpE, found in Salmonella agona (strain SL483).